Reading from the N-terminus, the 200-residue chain is Lipopolysaccharide core heptose(II)-phosphate phosphatase (200 aa).

The N-terminal stretch at 1-25 is a signal peptide; that stretch reads MLAFCRSSLKSKKYFIILLALAAIA.

The protein belongs to the phosphoglycerate mutase family. Ais subfamily.

The protein resides in the periplasm. The protein operates within bacterial outer membrane biogenesis; lipopolysaccharide metabolism. In terms of biological role, catalyzes the dephosphorylation of heptose(II) of the outer membrane lipopolysaccharide core. The sequence is that of Lipopolysaccharide core heptose(II)-phosphate phosphatase from Escherichia coli O6:K15:H31 (strain 536 / UPEC).